Consider the following 527-residue polypeptide: GMP synthase [glutamine-hydrolyzing] (527 aa).

One can recognise a Glutamine amidotransferase type-1 domain in the interval 13–202 (TILVLDFGSQ…AVDICGAAQK (190 aa)). Cys-89 serves as the catalytic Nucleophile. Residues His-176 and Glu-178 contribute to the active site. Positions 203–402 (WSMENFVDTE…MGIPHDLVWR (200 aa)) constitute a GMPS ATP-PPase domain. 231-237 (SGGVDST) provides a ligand contact to ATP. Residues Arg-304, Asp-464, Lys-519, and Glu-525 each coordinate XMP.

In terms of assembly, homodimer. Mg(2+) serves as cofactor.

Its subcellular location is the cytoplasm. It localises to the cytosol. It carries out the reaction XMP + L-glutamine + ATP + H2O = GMP + L-glutamate + AMP + diphosphate + 2 H(+). Its pathway is purine metabolism; GMP biosynthesis; GMP from XMP (L-Gln route): step 1/1. Catalyzes the conversion of xanthine monophosphate (XMP) to GMP in the presence of glutamine and ATP through an adenyl-XMP intermediate. The sequence is that of GMP synthase [glutamine-hydrolyzing] (GUA1) from Yarrowia lipolytica (strain CLIB 122 / E 150) (Yeast).